Consider the following 1450-residue polypeptide: Protein clueless (1450 aa).

Disordered regions lie at residues M1–E126 and K266–P287. The segment covering N29–P60 has biased composition (low complexity). The span at A62–N71 shows a compositional bias: basic residues. S271 is subject to Phosphoserine. The Clu domain maps to R425 to L667. Composition is skewed to basic and acidic residues over residues K725–A734 and K743–Q765. Disordered stretches follow at residues K725–A775 and P959–T1011. Residues K968–G983 show a composition bias toward basic residues. Residues N984–S1008 are compositionally biased toward low complexity. TPR repeat units lie at residues A1102–V1135, A1228–Y1261, and G1263–T1296. A disordered region spans residues N1410–S1450. Residues A1417 to D1428 are compositionally biased toward basic and acidic residues.

It belongs to the CLU family.

It localises to the cytoplasm. MRNA-binding protein involved in proper cytoplasmic distribution of mitochondria. This Drosophila ananassae (Fruit fly) protein is Protein clueless.